Consider the following 478-residue polypeptide: 3-isopropylmalate dehydratase large subunit (478 aa).

Residues C355, C415, and C418 each contribute to the [4Fe-4S] cluster site.

It belongs to the aconitase/IPM isomerase family. LeuC type 1 subfamily. Heterodimer of LeuC and LeuD. [4Fe-4S] cluster is required as a cofactor.

The enzyme catalyses (2R,3S)-3-isopropylmalate = (2S)-2-isopropylmalate. It participates in amino-acid biosynthesis; L-leucine biosynthesis; L-leucine from 3-methyl-2-oxobutanoate: step 2/4. Its function is as follows. Catalyzes the isomerization between 2-isopropylmalate and 3-isopropylmalate, via the formation of 2-isopropylmaleate. This chain is 3-isopropylmalate dehydratase large subunit, found in Paracoccus denitrificans (strain Pd 1222).